Here is an 809-residue protein sequence, read N- to C-terminus: Leucine--tRNA ligase (809 aa).

The short motif at 40 to 50 (PYPSGRIHMGH) is the 'HIGH' region element. The short motif at 579–583 (KMSKS) is the 'KMSKS' region element. Residue lysine 582 participates in ATP binding.

This sequence belongs to the class-I aminoacyl-tRNA synthetase family.

The protein resides in the cytoplasm. It carries out the reaction tRNA(Leu) + L-leucine + ATP = L-leucyl-tRNA(Leu) + AMP + diphosphate. The protein is Leucine--tRNA ligase of Campylobacter jejuni (strain RM1221).